Reading from the N-terminus, the 406-residue chain is Magnesium transporter NIPA4 (406 aa).

The Extracellular portion of the chain corresponds to 1 to 57 (MELRVANANGSCENGSIVSLYCSSQEVLCQIVRGISPEEPYNATLITWQERVRKKYG). N-linked (GlcNAc...) asparagine glycans are attached at residues N9, N14, and N42. Residues 58-78 (FYIGVGLAFLSCFLIGTSVIL) traverse the membrane as a helical segment. Residues 79 to 126 (KKKGLIRLVATGATRAVNGGYGYLKDPMWWAGMATMSAGEVANFGAYA) lie on the Cytoplasmic side of the membrane. Residues 127–147 (FAPATVVTPLGALSVLISAIF) form a helical membrane-spanning segment. At 148-155 (SSYCLGES) the chain is on the extracellular side. The helical transmembrane segment at 156–176 (LNLLGKLGCVICMAGSTVMVI) threads the bilayer. Over 177–197 (HAPKEEKVTTVAEMASKMKDT) the chain is Cytoplasmic. The helical transmembrane segment at 198 to 218 (GFIVFAVLLVVSCLILIFIVA) threads the bilayer. The Extracellular portion of the chain corresponds to 219–225 (PRYGQRN). The helical transmembrane segment at 226–246 (ILIYIIICSVIGSFSVTAVKG) threads the bilayer. Residues 247–263 (LGVTIRNFFQGLPVVRH) lie on the Cytoplasmic side of the membrane. A helical membrane pass occupies residues 264–284 (PLPYILSLILGLSIIIQVNFL). The Extracellular portion of the chain corresponds to 285 to 295 (NRALDIFNTSL). N292 carries N-linked (GlcNAc...) asparagine glycosylation. A helical transmembrane segment spans residues 296 to 316 (VFPIYYVFFTTVVVASSIVLF). Residues 317-326 (KEWYTMSAVD) lie on the Cytoplasmic side of the membrane. The chain crosses the membrane as a helical span at residues 327–347 (IVGTLSGFVTIILGVFMLHAF). The Extracellular segment spans residues 348 to 406 (KDLDINQISLPHTHKNPTPAPAPEPTVIKLEDKNVLVDNIELASTPSPQQKPKVFMTDS).

The protein belongs to the NIPA family.

The protein resides in the cell membrane. The catalysed reaction is Mg(2+)(in) = Mg(2+)(out). Acts as a Mg(2+) transporter. Can also transport other divalent cations such as Ba(2+), Sr(2+) and Fe(2+) but to a much less extent than Mg(2+). May be a receptor for ligands (trioxilins A3 and B3) from the hepoxilin pathway. The chain is Magnesium transporter NIPA4 (Nipal4) from Mus musculus (Mouse).